Here is a 331-residue protein sequence, read N- to C-terminus: Lipoyl synthase (331 aa).

[4Fe-4S] cluster-binding residues include Cys-74, Cys-79, Cys-85, Cys-100, Cys-104, Cys-107, and Ser-314. Residues 85–303 (CFGKGTATFM…ETEAYKMGFT (219 aa)) form the Radical SAM core domain.

It belongs to the radical SAM superfamily. Lipoyl synthase family. Requires [4Fe-4S] cluster as cofactor.

The protein resides in the cytoplasm. The catalysed reaction is [[Fe-S] cluster scaffold protein carrying a second [4Fe-4S](2+) cluster] + N(6)-octanoyl-L-lysyl-[protein] + 2 oxidized [2Fe-2S]-[ferredoxin] + 2 S-adenosyl-L-methionine + 4 H(+) = [[Fe-S] cluster scaffold protein] + N(6)-[(R)-dihydrolipoyl]-L-lysyl-[protein] + 4 Fe(3+) + 2 hydrogen sulfide + 2 5'-deoxyadenosine + 2 L-methionine + 2 reduced [2Fe-2S]-[ferredoxin]. Its pathway is protein modification; protein lipoylation via endogenous pathway; protein N(6)-(lipoyl)lysine from octanoyl-[acyl-carrier-protein]: step 2/2. Functionally, catalyzes the radical-mediated insertion of two sulfur atoms into the C-6 and C-8 positions of the octanoyl moiety bound to the lipoyl domains of lipoate-dependent enzymes, thereby converting the octanoylated domains into lipoylated derivatives. This Leptothrix cholodnii (strain ATCC 51168 / LMG 8142 / SP-6) (Leptothrix discophora (strain SP-6)) protein is Lipoyl synthase.